A 231-amino-acid chain; its full sequence is MNDPKVIVALDYDNLADALAFVDKIDPSTCRLKVGKEMFTLFGPDFVRELHKRGFSVFLDLKFHDIPNTCSKAVKAAAELGVWMVNVHASGGERMMAASREILEPYGKERPLLIGVTVLTSMESADLQGIGILSAPQDHVLRLATLTKNAGLDGVVCSAQEASLLKQHLGREFKLVTPGIRPAGSEQGDQRRIMTPAQAIASGSDYLVIGRPITQAAHPEVVLEEINSSLV.

Residues Asp11, Lys33, 60 to 69, Thr120, Arg181, Gln190, Gly210, and Arg211 contribute to the substrate site; that span reads DLKFHDIPNT. Lys62 serves as the catalytic Proton donor.

It belongs to the OMP decarboxylase family. Type 1 subfamily. In terms of assembly, homodimer.

It carries out the reaction orotidine 5'-phosphate + H(+) = UMP + CO2. Its pathway is pyrimidine metabolism; UMP biosynthesis via de novo pathway; UMP from orotate: step 2/2. Its function is as follows. Catalyzes the decarboxylation of orotidine 5'-monophosphate (OMP) to uridine 5'-monophosphate (UMP). This chain is Orotidine 5'-phosphate decarboxylase, found in Vibrio cholerae serotype O1 (strain ATCC 39315 / El Tor Inaba N16961).